The sequence spans 364 residues: Methylthioribose-1-phosphate isomerase (364 aa).

Residues 49–51 (RGA), Arg-89, and Gln-201 contribute to the substrate site. Residue Asp-242 is the Proton donor of the active site. 252–253 (NK) contacts substrate.

The protein belongs to the eIF-2B alpha/beta/delta subunits family. MtnA subfamily.

It catalyses the reaction 5-(methylsulfanyl)-alpha-D-ribose 1-phosphate = 5-(methylsulfanyl)-D-ribulose 1-phosphate. It participates in amino-acid biosynthesis; L-methionine biosynthesis via salvage pathway; L-methionine from S-methyl-5-thio-alpha-D-ribose 1-phosphate: step 1/6. Its function is as follows. Catalyzes the interconversion of methylthioribose-1-phosphate (MTR-1-P) into methylthioribulose-1-phosphate (MTRu-1-P). This Leptospira interrogans serogroup Icterohaemorrhagiae serovar Lai (strain 56601) protein is Methylthioribose-1-phosphate isomerase.